Reading from the N-terminus, the 378-residue chain is D-alanine--D-alanine ligase (378 aa).

The ATP-grasp domain maps to 157 to 368 (KVVFESAGLS…YGDLIDELIH (212 aa)). An ATP-binding site is contributed by 189 to 244 (VDKLGFPVFVKPARAGSSMGISKVDSMEGLDAAIDEARRHDLKLVIEAGIVGREIE). The Mg(2+) site is built by Asp-322, Glu-335, and Asn-337.

It belongs to the D-alanine--D-alanine ligase family. Mg(2+) is required as a cofactor. The cofactor is Mn(2+).

It is found in the cytoplasm. It carries out the reaction 2 D-alanine + ATP = D-alanyl-D-alanine + ADP + phosphate + H(+). It functions in the pathway cell wall biogenesis; peptidoglycan biosynthesis. Its function is as follows. Cell wall formation. This is D-alanine--D-alanine ligase from Paenarthrobacter aurescens (strain TC1).